The primary structure comprises 122 residues: Large ribosomal subunit protein bL12 (122 aa).

It belongs to the bacterial ribosomal protein bL12 family. In terms of assembly, homodimer. Part of the ribosomal stalk of the 50S ribosomal subunit. Forms a multimeric L10(L12)X complex, where L10 forms an elongated spine to which 2 to 4 L12 dimers bind in a sequential fashion. Binds GTP-bound translation factors.

Functionally, forms part of the ribosomal stalk which helps the ribosome interact with GTP-bound translation factors. Is thus essential for accurate translation. This Flavobacterium psychrophilum (strain ATCC 49511 / DSM 21280 / CIP 103535 / JIP02/86) protein is Large ribosomal subunit protein bL12.